Here is an 86-residue protein sequence, read N- to C-terminus: Small ribosomal subunit protein bS20 (86 aa).

This sequence belongs to the bacterial ribosomal protein bS20 family.

Its function is as follows. Binds directly to 16S ribosomal RNA. This is Small ribosomal subunit protein bS20 from Paenarthrobacter aurescens (strain TC1).